The sequence spans 113 residues: Large ribosomal subunit protein bL17 (113 aa).

This sequence belongs to the bacterial ribosomal protein bL17 family. In terms of assembly, part of the 50S ribosomal subunit. Contacts protein L32.

The chain is Large ribosomal subunit protein bL17 from Clostridium novyi (strain NT).